The chain runs to 217 residues: GRB2-related adapter protein (217 aa).

In terms of domain architecture, SH3 1 spans 1-58; it reads MESVALYSFQATESDELAFNKGDTLKILNMEDDQNWYKAELRGVEGFIPKNYIRVKPH. Residues 60–154 form the SH2 domain; that stretch reads WYSGRISRQL…QIFLRDEEPL (95 aa). The SH3 2 domain occupies 158–217; the sequence is PGACFAQAQFDFSAQDPSQLSFRRGDIIEVLERPDPHWWRGRSCGRVGFFPRSYVQPVHL.

It belongs to the GRB2/sem-5/DRK family. In terms of assembly, associates through its SH2 domain with ligand-activated receptors for stem cell factor (KIT) and erythropoietin (EPOR). Also forms a stable complex with the Bcr-Abl oncoprotein. GRAP is associated with the Ras guanine nucleotide exchange factor SOS1, primarily through its N-terminal SH3 domain. Interacts with phosphorylated LAT upon TCR activation. Interacts with SHB.

It is found in the membrane. Its subcellular location is the synapse. Functionally, couples signals from receptor and cytoplasmic tyrosine kinases to the Ras signaling pathway. Plays a role in the inner ear and in hearing. In Homo sapiens (Human), this protein is GRB2-related adapter protein.